We begin with the raw amino-acid sequence, 275 residues long: uncharacterized protein (275 aa).

A coiled-coil region spans residues 75–157 (AKELIKNRRL…AELKQAAEQG (83 aa)).

This is an uncharacterized protein from Bacillus subtilis (strain 168).